Consider the following 372-residue polypeptide: 4-hydroxy-3-methylbut-2-en-1-yl diphosphate synthase (flavodoxin) (372 aa).

The [4Fe-4S] cluster site is built by Cys-270, Cys-273, Cys-305, and Glu-312.

It belongs to the IspG family. [4Fe-4S] cluster is required as a cofactor.

It catalyses the reaction (2E)-4-hydroxy-3-methylbut-2-enyl diphosphate + oxidized [flavodoxin] + H2O + 2 H(+) = 2-C-methyl-D-erythritol 2,4-cyclic diphosphate + reduced [flavodoxin]. It functions in the pathway isoprenoid biosynthesis; isopentenyl diphosphate biosynthesis via DXP pathway; isopentenyl diphosphate from 1-deoxy-D-xylulose 5-phosphate: step 5/6. Functionally, converts 2C-methyl-D-erythritol 2,4-cyclodiphosphate (ME-2,4cPP) into 1-hydroxy-2-methyl-2-(E)-butenyl 4-diphosphate. This Escherichia coli O8 (strain IAI1) protein is 4-hydroxy-3-methylbut-2-en-1-yl diphosphate synthase (flavodoxin).